Here is a 517-residue protein sequence, read N- to C-terminus: GMP synthase [glutamine-hydrolyzing] (517 aa).

One can recognise a Glutamine amidotransferase type-1 domain in the interval 9 to 199 (RILILDFGSQ…VLGVCGCERL (191 aa)). Cys-86 acts as the Nucleophile in catalysis. Active-site residues include His-173 and Glu-175. Residues 200–392 (WTSESIIEDA…LGLPYNMLYR (193 aa)) form the GMPS ATP-PPase domain. 227 to 233 (SGGVDSS) lines the ATP pocket.

In terms of assembly, homodimer.

It carries out the reaction XMP + L-glutamine + ATP + H2O = GMP + L-glutamate + AMP + diphosphate + 2 H(+). Its pathway is purine metabolism; GMP biosynthesis; GMP from XMP (L-Gln route): step 1/1. In terms of biological role, catalyzes the synthesis of GMP from XMP. The sequence is that of GMP synthase [glutamine-hydrolyzing] from Vibrio cholerae serotype O1 (strain ATCC 39541 / Classical Ogawa 395 / O395).